The following is a 461-amino-acid chain: Isthmin-1 (461 aa).

Residues 1-26 (MVRLAAELLLLLGLLLLTLHITVLRS) form the signal peptide. N33 is a glycosylation site (N-linked (GlcNAc...) asparagine). Residues 40–58 (QDSRVAENNVNADSSSSVQ) show a composition bias toward polar residues. Disordered stretches follow at residues 40-62 (QDSR…LGPG), 73-92 (ASQP…RDGP), and 128-188 (EGSE…NFLK). A compositionally biased stretch (basic and acidic residues) spans 131 to 141 (EPEKGMRKENK). Positions 156 to 165 (SSSSSSSSVS) are enriched in low complexity. A TSP type-1 domain is found at 215-259 (DGEGDWSAWSPCSVSCGNGNQKRTRSCGYACTATESRTCDMPSCP). 3 cysteine pairs are disulfide-bonded: C226/C253, C230/C258, and C241/C245. The N-linked (GlcNAc...) asparagine glycan is linked to N282. Positions 286-449 (LFGVDTDSCE…QKCAENPQDE (164 aa)) constitute an AMOP domain.

Belongs to the isthmin family.

It is found in the secreted. In terms of biological role, may specifically influence certain angiogenesis process. This Danio rerio (Zebrafish) protein is Isthmin-1 (ism1).